Here is a 252-residue protein sequence, read N- to C-terminus: MSVVRLIIEYDGTPYVGWQRQPNGLSVQQVVEEALAKVCGGPHSLVSSGRTDAGVHARGMVAHFVTPQPLPMAAYREGVNRFLPAQIAVRDAALMPDDFHARYSAVGKWYRYSIYRSPVRSPLACRFSWHVRTVLDLQAMRQAARLLVGRHDFAAFRASGCAARTTVREVFSVDIVDAEEWVYVDVRGSGFLRNMVRIMVGTLVEVGRGARPPEEVGAMLAGGCRKQSGITAPAQGLCLMEVAYAPQDCVEG.

The active-site Nucleophile is aspartate 52. Tyrosine 110 contacts substrate.

This sequence belongs to the tRNA pseudouridine synthase TruA family. Homodimer.

The enzyme catalyses uridine(38/39/40) in tRNA = pseudouridine(38/39/40) in tRNA. Formation of pseudouridine at positions 38, 39 and 40 in the anticodon stem and loop of transfer RNAs. In Syntrophotalea carbinolica (strain DSM 2380 / NBRC 103641 / GraBd1) (Pelobacter carbinolicus), this protein is tRNA pseudouridine synthase A.